The chain runs to 265 residues: Arginine and glutamate-rich protein 1 (265 aa).

A compositionally biased stretch (basic residues) spans 1–54 (MGRSRSRSSSRSKHAKSGKHNKKRSRSREKERVRKRSKSRESKRNRRRESRSRS). Residues 1 to 66 (MGRSRSRSSS…NTASRRERER (66 aa)) form a necessary and sufficient for RNA binding region. Positions 1–106 (MGRSRSRSSS…EKKAEYERQR (106 aa)) are disordered. Composition is skewed to basic and acidic residues over residues 60-76 (SRRERERAASPPDRIDI) and 85-106 (SSLDEKQKREDEEKKAEYERQR). Residues 67–265 (AASPPDRIDI…KLSFSLKSPD (199 aa)) form a necessary and sufficient for transcriptional regulation region. Residues 164-168 (LLEEL) carry the LXXLL motif 1; degenerate motif. The short motif at 193 to 197 (LERIL) is the LXXLL motif 2; degenerate element. Positions 229–245 (RMKLEQERQRQQKEEQK) are enriched in basic and acidic residues. Residues 229–265 (RMKLEQERQRQQKEEQKIILGKGKSRPKLSFSLKSPD) form a disordered region.

The protein belongs to the ARGLU1 family.

Its subcellular location is the nucleus. It is found in the nucleus speckle. The protein resides in the chromosome. In terms of biological role, dual function regulator of gene expression; regulator of transcription and modulator of alternative splicing. General coactivator of nuclear receptor-induced gene expression. This Xenopus tropicalis (Western clawed frog) protein is Arginine and glutamate-rich protein 1 (arglu1).